Here is a 435-residue protein sequence, read N- to C-terminus: N-lysine methyltransferase SMYD2-A (435 aa).

The 235-residue stretch at 7–241 (EGTERFLSPG…PEEEIFNSYI (235 aa)) folds into the SET domain. 17-19 (KGR) contacts S-adenosyl-L-methionine. Residues cysteine 52, cysteine 55, cysteine 65, cysteine 68, cysteine 74, cysteine 78, histidine 86, and cysteine 90 each coordinate Zn(2+). Residues 52–90 (CECCFTRKEGLSKCGKCKQAYYCNVECQRGDWPMHKLEC) form an MYND-type zinc finger. S-adenosyl-L-methionine is bound by residues histidine 137, 206–207 (NH), and 258–260 (YFF).

This sequence belongs to the class V-like SAM-binding methyltransferase superfamily.

Its subcellular location is the cytoplasm. It is found in the cytosol. It localises to the nucleus. The enzyme catalyses L-lysyl(4)-[histone H3] + 3 S-adenosyl-L-methionine = N(6),N(6),N(6)-trimethyl-L-lysyl(4)-[histone H3] + 3 S-adenosyl-L-homocysteine + 3 H(+). The catalysed reaction is L-lysyl-[protein] + S-adenosyl-L-methionine = N(6)-methyl-L-lysyl-[protein] + S-adenosyl-L-homocysteine + H(+). Functionally, protein-lysine N-methyltransferase that methylates both histones and non-histone proteins, including p53/TP53 and RB1. Specifically trimethylates histone H3 'Lys-4' (H3K4me3) in vivo. The activity requires interaction with HSP90alpha. Shows even higher methyltransferase activity on p53/TP53. Monomethylates 'Lys-370' of p53/TP53, leading to decreased DNA-binding activity and subsequent transcriptional regulation activity of p53/TP53. Monomethylates RB1 at 'Lys-860'. This chain is N-lysine methyltransferase SMYD2-A (smyd2a), found in Danio rerio (Zebrafish).